Consider the following 466-residue polypeptide: 3-isopropylmalate dehydratase large subunit (466 aa).

Residues Cys346, Cys406, and Cys409 each coordinate [4Fe-4S] cluster.

It belongs to the aconitase/IPM isomerase family. LeuC type 1 subfamily. Heterodimer of LeuC and LeuD. [4Fe-4S] cluster is required as a cofactor.

It catalyses the reaction (2R,3S)-3-isopropylmalate = (2S)-2-isopropylmalate. It functions in the pathway amino-acid biosynthesis; L-leucine biosynthesis; L-leucine from 3-methyl-2-oxobutanoate: step 2/4. In terms of biological role, catalyzes the isomerization between 2-isopropylmalate and 3-isopropylmalate, via the formation of 2-isopropylmaleate. This is 3-isopropylmalate dehydratase large subunit from Cytophaga hutchinsonii (strain ATCC 33406 / DSM 1761 / CIP 103989 / NBRC 15051 / NCIMB 9469 / D465).